Here is a 276-residue protein sequence, read N- to C-terminus: Flagellin FljJ (276 aa).

Positions 51 to 80 (RPGAGDMSGLAREDEPGSGDIDRGRGPRAG) are disordered. A compositionally biased stretch (basic and acidic residues) spans 61–75 (AREDEPGSGDIDRGR).

This sequence belongs to the bacterial flagellin family. As to quaternary structure, in C.crescentus, the flagellar filament is composed of multiple flagellins of 29 kDa; 27 kDa and 25 kDa.

Its subcellular location is the secreted. The protein localises to the bacterial flagellum. Its function is as follows. Flagellin is the subunit protein which polymerizes to form the filaments of bacterial flagella. The polypeptide is Flagellin FljJ (fljJ) (Caulobacter vibrioides (strain ATCC 19089 / CIP 103742 / CB 15) (Caulobacter crescentus)).